The primary structure comprises 264 residues: tRNA pseudouridine synthase A (264 aa).

The active-site Nucleophile is the D51. Substrate is bound at residue Y109.

Belongs to the tRNA pseudouridine synthase TruA family. In terms of assembly, homodimer.

The enzyme catalyses uridine(38/39/40) in tRNA = pseudouridine(38/39/40) in tRNA. Its function is as follows. Formation of pseudouridine at positions 38, 39 and 40 in the anticodon stem and loop of transfer RNAs. The chain is tRNA pseudouridine synthase A from Vibrio vulnificus (strain CMCP6).